Consider the following 355-residue polypeptide: MSRPKNDTFLRALLKEPTEYTPLWLMRQAGRYLPEYCETRKRAGNFLNLCKSPTMACEVTLQPLARYDLDAAILFSDILTVPDAMGLGLYFAEGEGPKFERPLREEWAINNLTVTDPYEHLGYVMDAVSEIRRALDNSVPLIGFSGSPYTLACYMVEGEGSSDFRNIKAMLYNRPDLLHRILSVTADSVIAYLNAQIDSGAQAVMIFDTWGGSLSNAAYEEFSLQYMRRIVAGLKKEKDGQRIPSIVFTKNGGLWLEKIADIGCDAVGLDWTIDIGEARRRVGDKVALQGNLDPNVLFAQPEIVAAEAKKVLDSFGPANTGHVFNLGHGISQFTPPESVTALVEAVHSHSRLSRK.

Substrate is bound by residues 27–31 (RQAGR), aspartate 77, tyrosine 154, threonine 209, and histidine 328.

The protein belongs to the uroporphyrinogen decarboxylase family. As to quaternary structure, homodimer.

It is found in the cytoplasm. The catalysed reaction is uroporphyrinogen III + 4 H(+) = coproporphyrinogen III + 4 CO2. It participates in porphyrin-containing compound metabolism; protoporphyrin-IX biosynthesis; coproporphyrinogen-III from 5-aminolevulinate: step 4/4. Functionally, catalyzes the decarboxylation of four acetate groups of uroporphyrinogen-III to yield coproporphyrinogen-III. The protein is Uroporphyrinogen decarboxylase of Dechloromonas aromatica (strain RCB).